The sequence spans 338 residues: Anthranilate phosphoribosyltransferase (338 aa).

Residues G81, 84 to 85 (GD), T89, 91 to 94 (NVST), 109 to 117 (KHGNRSVSS), and S121 each bind 5-phospho-alpha-D-ribose 1-diphosphate. G81 is a binding site for anthranilate. Mg(2+) is bound at residue S93. Residue N112 coordinates anthranilate. Residue R167 participates in anthranilate binding. Mg(2+)-binding residues include D226 and E227.

Belongs to the anthranilate phosphoribosyltransferase family. As to quaternary structure, homodimer. The cofactor is Mg(2+).

It catalyses the reaction N-(5-phospho-beta-D-ribosyl)anthranilate + diphosphate = 5-phospho-alpha-D-ribose 1-diphosphate + anthranilate. The protein operates within amino-acid biosynthesis; L-tryptophan biosynthesis; L-tryptophan from chorismate: step 2/5. Functionally, catalyzes the transfer of the phosphoribosyl group of 5-phosphorylribose-1-pyrophosphate (PRPP) to anthranilate to yield N-(5'-phosphoribosyl)-anthranilate (PRA). This chain is Anthranilate phosphoribosyltransferase, found in Alkalilimnicola ehrlichii (strain ATCC BAA-1101 / DSM 17681 / MLHE-1).